Here is a 170-residue protein sequence, read N- to C-terminus: Ureidoglycolate lyase (170 aa).

The protein belongs to the ureidoglycolate lyase family. In terms of assembly, homodimer. The cofactor is Ni(2+).

It catalyses the reaction (S)-ureidoglycolate = urea + glyoxylate. Its pathway is nitrogen metabolism; (S)-allantoin degradation. Its function is as follows. Catalyzes the catabolism of the allantoin degradation intermediate (S)-ureidoglycolate, generating urea and glyoxylate. Involved in the utilization of allantoin as nitrogen source. The protein is Ureidoglycolate lyase of Pseudomonas savastanoi pv. phaseolicola (strain 1448A / Race 6) (Pseudomonas syringae pv. phaseolicola (strain 1448A / Race 6)).